The primary structure comprises 154 residues: 3-hydroxyacyl-[acyl-carrier-protein] dehydratase FabZ (154 aa).

His55 is a catalytic residue.

The protein belongs to the thioester dehydratase family. FabZ subfamily.

It localises to the cytoplasm. It catalyses the reaction a (3R)-hydroxyacyl-[ACP] = a (2E)-enoyl-[ACP] + H2O. Functionally, involved in unsaturated fatty acids biosynthesis. Catalyzes the dehydration of short chain beta-hydroxyacyl-ACPs and long chain saturated and unsaturated beta-hydroxyacyl-ACPs. This is 3-hydroxyacyl-[acyl-carrier-protein] dehydratase FabZ from Nitratidesulfovibrio vulgaris (strain DSM 19637 / Miyazaki F) (Desulfovibrio vulgaris).